Here is a 681-residue protein sequence, read N- to C-terminus: Chaperone protein HtpG (681 aa).

An a; substrate-binding region spans residues 1–326; the sequence is MQKGNIGVTT…SPDIPLNVSR (326 aa). The b stretch occupies residues 327–545; the sequence is SYLQSDSNVK…YMRRMKEMAN (219 aa). Residues 546–681 are c; the sequence is IQAGMSFYGE…NFVKRSIELI (136 aa). The disordered stretch occupies residues 601–620; sequence DALKKKQEGKKDEDIPTAEK.

Belongs to the heat shock protein 90 family. As to quaternary structure, homodimer.

The protein localises to the cytoplasm. Its function is as follows. Molecular chaperone. Has ATPase activity. The chain is Chaperone protein HtpG from Bacteroides fragilis (strain ATCC 25285 / DSM 2151 / CCUG 4856 / JCM 11019 / LMG 10263 / NCTC 9343 / Onslow / VPI 2553 / EN-2).